Consider the following 102-residue polypeptide: Large ribosomal subunit protein bL21 (102 aa).

This sequence belongs to the bacterial ribosomal protein bL21 family. In terms of assembly, part of the 50S ribosomal subunit. Contacts protein L20.

Its function is as follows. This protein binds to 23S rRNA in the presence of protein L20. In Bacillus subtilis (strain 168), this protein is Large ribosomal subunit protein bL21.